An 891-amino-acid polypeptide reads, in one-letter code: 26S proteasome non-ATPase regulatory subunit 2 homolog B (891 aa).

The disordered stretch occupies residues 1-43; it reads MAPVPDPNSVGGGAKRDEATTKIPSKDSKKKDDKKEEDLSEED. Residues 14 to 37 show a composition bias toward basic and acidic residues; the sequence is AKRDEATTKIPSKDSKKKDDKKEE. PC repeat units follow at residues 414–447, 448–484, 485–519, 522–556, 565–594, 674–705, and 724–739; these read SAVA…PVVA, GALL…SVRI, GAIM…PLDV, FAAL…AELG, LGLG…KIRK, LALG…EVAM, and AGML…KDAS.

It belongs to the proteasome subunit S2 family. Component of the 19S regulatory particle (RP/PA700) base subcomplex of the 26S proteasome. The 26S proteasome is composed of a core protease (CP), known as the 20S proteasome, capped at one or both ends by the 19S regulatory particle (RP/PA700). The RP/PA700 complex is composed of at least 17 different subunits in two subcomplexes, the base and the lid, which form the portions proximal and distal to the 20S proteolytic core, respectively. In terms of processing, ubiquitinated. Expressed in stems, leaves, buds, flowers, siliques and developing seeds.

Its function is as follows. Acts as a regulatory subunit of the 26 proteasome which is involved in the ATP-dependent degradation of ubiquitinated proteins. The chain is 26S proteasome non-ATPase regulatory subunit 2 homolog B (RPN1B) from Arabidopsis thaliana (Mouse-ear cress).